Reading from the N-terminus, the 782-residue chain is Ribosome biogenesis protein ERB1 (782 aa).

Residues 1–11 (MSVNSRKRKVA) show a composition bias toward basic residues. Residues 1 to 120 (MSVNSRKRKV…LEGEEDESLK (120 aa)) form a disordered region. 2 stretches are compositionally biased toward acidic residues: residues 39-51 (DESE…EDTD) and 59-75 (LSDE…DEAE). Polar residues predominate over residues 82–92 (RNLNTSGGSQQ). Over residues 106-117 (GADGELEGEEDE) the composition is skewed to acidic residues. WD repeat units lie at residues 432–471 (GQEG…QVWN) and 475–516 (SDEE…PDVE). Residues 533–556 (KPSTAANGEAPKQSPGKWSRPGSR) are disordered. WD repeat units follow at residues 612–652 (RLKG…KILQ), 653–692 (PGAK…KPYK), 696–736 (FHKE…DLME), and 752–782 (KSRL…RLWN).

It belongs to the WD repeat BOP1/ERB1 family. In terms of assembly, component of the NOP7 complex, composed of ERB1, NOP7 and YTM1. The complex is held together by ERB1, which interacts with NOP7 via its N-terminal domain and with YTM1 via a high-affinity interaction between the seven-bladed beta-propeller domains of the 2 proteins. The NOP7 complex associates with the 66S pre-ribosome.

Its subcellular location is the nucleus. It is found in the nucleolus. It localises to the nucleoplasm. In terms of biological role, component of the NOP7 complex, which is required for maturation of the 25S and 5.8S ribosomal RNAs and formation of the 60S ribosome. This chain is Ribosome biogenesis protein ERB1, found in Phaeosphaeria nodorum (strain SN15 / ATCC MYA-4574 / FGSC 10173) (Glume blotch fungus).